Here is a 145-residue protein sequence, read N- to C-terminus: RNA polymerase-binding transcription factor DksA (145 aa).

Residues C108, C111, C129, and C132 each contribute to the Zn(2+) site. The dksA C4-type zinc finger occupies 108-132 (CDCCGEEIGIRRLEARPTADLCIDC).

This sequence belongs to the DksA family. In terms of assembly, interacts directly with the RNA polymerase.

It localises to the cytoplasm. Its function is as follows. Transcription factor that acts by binding directly to the RNA polymerase (RNAP). Required for negative regulation of rRNA expression and positive regulation of several amino acid biosynthesis promoters. Also required for regulation of fis expression. This Haemophilus influenzae (strain ATCC 51907 / DSM 11121 / KW20 / Rd) protein is RNA polymerase-binding transcription factor DksA.